The chain runs to 183 residues: Adenine phosphoribosyltransferase (183 aa).

Belongs to the purine/pyrimidine phosphoribosyltransferase family. Homodimer.

The protein localises to the cytoplasm. It carries out the reaction AMP + diphosphate = 5-phospho-alpha-D-ribose 1-diphosphate + adenine. It functions in the pathway purine metabolism; AMP biosynthesis via salvage pathway; AMP from adenine: step 1/1. Its function is as follows. Catalyzes a salvage reaction resulting in the formation of AMP, that is energically less costly than de novo synthesis. In Cronobacter sakazakii (strain ATCC BAA-894) (Enterobacter sakazakii), this protein is Adenine phosphoribosyltransferase.